The primary structure comprises 219 residues: Transmembrane protein 125 (219 aa).

Transmembrane regions (helical) follow at residues 36 to 56, 68 to 88, 114 to 134, and 147 to 167; these read LCFA…VALL, LAVG…QLMS, ALVV…LAGL, and MLSV…GLLL.

The protein localises to the membrane. The chain is Transmembrane protein 125 (TMEM125) from Bos taurus (Bovine).